The chain runs to 107 residues: Ribonuclease P protein subunit rpr2 (107 aa).

Positions 59, 62, 93, and 96 each coordinate Zn(2+).

This sequence belongs to the eukaryotic/archaeal RNase P protein component 4 family. Requires Zn(2+) as cofactor.

Its subcellular location is the cytoplasm. The protein resides in the nucleus. It catalyses the reaction Endonucleolytic cleavage of RNA, removing 5'-extranucleotides from tRNA precursor.. Functionally, component of ribonuclease P, a protein complex that generates mature tRNA molecules by cleaving their 5'-ends. The sequence is that of Ribonuclease P protein subunit rpr2 (rpr2) from Schizosaccharomyces pombe (strain 972 / ATCC 24843) (Fission yeast).